The following is a 208-amino-acid chain: Large ribosomal subunit protein uL4 (208 aa).

The tract at residues 50–83 is disordered; it reads VKTRAEVSGGGRKPWKQKGTGRARQGSIRAPQWK.

It belongs to the universal ribosomal protein uL4 family. As to quaternary structure, part of the 50S ribosomal subunit.

One of the primary rRNA binding proteins, this protein initially binds near the 5'-end of the 23S rRNA. It is important during the early stages of 50S assembly. It makes multiple contacts with different domains of the 23S rRNA in the assembled 50S subunit and ribosome. Functionally, forms part of the polypeptide exit tunnel. In Mycoplasma capricolum subsp. capricolum (strain California kid / ATCC 27343 / NCTC 10154), this protein is Large ribosomal subunit protein uL4.